A 602-amino-acid polypeptide reads, in one-letter code: 3-hydroxy-3-methylglutaryl-coenzyme A reductase 2 (602 aa).

A run of 2 helical transmembrane segments spans residues 44–67 (ASDALPLPLYLTTNGLFFTMFFSV) and 95–115 (AIVSLIASVIYLLGFFGIGFV). Residues 116–187 (QTFVSRGNND…PLITSASSGE (72 aa)) form a linker region. N-linked (GlcNAc...) asparagine glycosylation is present at Asn-124. A catalytic region spans residues 188-602 (DEEIIKSVVQ…STKDVTKASS (415 aa)). Glu-281 (charge relay system) is an active-site residue. N-linked (GlcNAc...) asparagine glycosylation occurs at Asn-345. Lys-413 serves as the catalytic Charge relay system. An N-linked (GlcNAc...) asparagine glycan is attached at Asn-458. The active-site Charge relay system is Asp-489. His-587 acts as the Proton donor in catalysis. Asn-591 is a glycosylation site (N-linked (GlcNAc...) asparagine).

Belongs to the HMG-CoA reductase family.

Its subcellular location is the endoplasmic reticulum membrane. The enzyme catalyses (R)-mevalonate + 2 NADP(+) + CoA = (3S)-3-hydroxy-3-methylglutaryl-CoA + 2 NADPH + 2 H(+). It participates in metabolic intermediate biosynthesis; (R)-mevalonate biosynthesis; (R)-mevalonate from acetyl-CoA: step 3/3. Functionally, catalyzes the synthesis of mevalonate. The specific precursor of all isoprenoid compounds present in plants. The chain is 3-hydroxy-3-methylglutaryl-coenzyme A reductase 2 (HMG2) from Solanum lycopersicum (Tomato).